We begin with the raw amino-acid sequence, 332 residues long: Fructose-1,6-bisphosphatase class 1 (332 aa).

Residues E89, D110, L112, and D113 each coordinate Mg(2+). Residues 113–116 (DGSS), N206, Y239, 257–259 (YLY), and K269 each bind substrate. A Mg(2+)-binding site is contributed by E275.

The protein belongs to the FBPase class 1 family. Homotetramer. Requires Mg(2+) as cofactor.

It is found in the cytoplasm. It carries out the reaction beta-D-fructose 1,6-bisphosphate + H2O = beta-D-fructose 6-phosphate + phosphate. The protein operates within carbohydrate biosynthesis; gluconeogenesis. This chain is Fructose-1,6-bisphosphatase class 1, found in Escherichia coli (strain ATCC 8739 / DSM 1576 / NBRC 3972 / NCIMB 8545 / WDCM 00012 / Crooks).